The primary structure comprises 805 residues: U-box domain-containing protein 70 (805 aa).

TPR repeat units follow at residues 15-48, 49-82, 90-127, 129-153, 154-187, 189-221, and 222-255; these read ARRE…DPRD, ISFL…GREL, ARAL…HYSE, TLAK…DQEA, ADHH…NPKD, RVFS…DPTF, and LKGY…DPNN. Residues 136–160 are disordered; sequence AEEARKEIEERERLDQEAADHHRDR. Positions 341 to 417 form a coiled coil; it reads RKETEESLSR…VREVEELRQK (77 aa). The Protein kinase domain maps to 445–711; sequence FSNSLKIGEG…GEVWAIVEAI (267 aa). Residues 451-459 and Lys-472 contribute to the ATP site; that span reads IGEGGFGCV. Asp-567 (proton acceptor) is an active-site residue. Positions 730–804 constitute a U-box domain; that stretch reads SPPSYFICPI…QEWLQQHSMS (75 aa).

It belongs to the protein kinase superfamily. Ser/Thr protein kinase family. As to quaternary structure, interacts with MODD.

It catalyses the reaction L-seryl-[protein] + ATP = O-phospho-L-seryl-[protein] + ADP + H(+). The enzyme catalyses L-threonyl-[protein] + ATP = O-phospho-L-threonyl-[protein] + ADP + H(+). The catalysed reaction is S-ubiquitinyl-[E2 ubiquitin-conjugating enzyme]-L-cysteine + [acceptor protein]-L-lysine = [E2 ubiquitin-conjugating enzyme]-L-cysteine + N(6)-ubiquitinyl-[acceptor protein]-L-lysine.. It participates in protein modification; protein ubiquitination. Its function is as follows. Functions as an E3 ubiquitin ligase. Is recruited by MODD to promote ubiquitination of BZIP46, a positive regulator of abscisic acid (ABA) signaling and drought stress tolerance. This chain is U-box domain-containing protein 70, found in Oryza sativa subsp. japonica (Rice).